The sequence spans 472 residues: 3-isopropylmalate dehydratase large subunit (472 aa).

The [4Fe-4S] cluster site is built by Cys351, Cys412, and Cys415.

Belongs to the aconitase/IPM isomerase family. LeuC type 1 subfamily. Heterodimer of LeuC and LeuD. The cofactor is [4Fe-4S] cluster.

The enzyme catalyses (2R,3S)-3-isopropylmalate = (2S)-2-isopropylmalate. It functions in the pathway amino-acid biosynthesis; L-leucine biosynthesis; L-leucine from 3-methyl-2-oxobutanoate: step 2/4. In terms of biological role, catalyzes the isomerization between 2-isopropylmalate and 3-isopropylmalate, via the formation of 2-isopropylmaleate. The protein is 3-isopropylmalate dehydratase large subunit of Marinobacter nauticus (strain ATCC 700491 / DSM 11845 / VT8) (Marinobacter aquaeolei).